We begin with the raw amino-acid sequence, 210 residues long: Kinetochore protein Spc25 (210 aa).

Positions 42 to 106 (TMENIKRQQH…KKKQERDKLI (65 aa)) form a coiled coil.

It belongs to the SPC25 family. As to quaternary structure, component of the Ndc80 complex, which is composed of Ndc80, Nuf2 and Spc25.

The protein localises to the nucleus. It is found in the chromosome. Its subcellular location is the centromere. The protein resides in the kinetochore. In terms of biological role, acts as a component of the essential kinetochore-associated Ndc80 complex, which is required for chromosome segregation and spindle checkpoint activity during meiosis and mitosis. Required for kinetochore integrity and the organization of stable microtubule binding sites in the outer plate of the kinetochore. Participates in SAC signaling that responds specifically to disruptions in spindle microtubule dynamics. The NDC80 complex synergistically enhances the affinity of the SKA1 complex for microtubules and may allow the NDC80 complex to track depolymerizing microtubules. The polypeptide is Kinetochore protein Spc25 (Drosophila virilis (Fruit fly)).